The chain runs to 697 residues: Serine/threonine-protein kinase tousled-like 2 (697 aa).

2 disordered regions span residues 27–136 (KAPL…TAPV) and 289–315 (LAKR…NKTN). The segment covering 31-44 (NSESSNQSLCSLGS) has biased composition (polar residues). The span at 46 to 62 (SDKELEQTPEKKQNDQR) shows a compositional bias: basic and acidic residues. Over residues 111–131 (SSPQHSLSNPLPLPSQQCSPP) the composition is skewed to low complexity. 2 coiled-coil regions span residues 264–293 (AFQN…AKRK) and 334–372 (FKLR…IHNE). One can recognise a Protein kinase domain in the interval 387–666 (YLLLHLLGRG…VQQLACDPYL (280 aa)). ATP is bound by residues 393-401 (LGRGGFSEV) and Lys416. Asp517 acts as the Proton acceptor in catalysis.

It belongs to the protein kinase superfamily. Ser/Thr protein kinase family. As to quaternary structure, monomer. May form homodimers; homodimerization may enhance autophosphoylation and enzymatic activity. Heterodimer with TLK1. It depends on Mg(2+) as a cofactor. In terms of processing, phosphorylated. Autophosphorylated; phosphorylation promotes the assembly of higher order oligomers and enzymatic activity.

Its subcellular location is the nucleus. The protein localises to the nucleoplasm. It localises to the cytoplasm. The protein resides in the perinuclear region. It is found in the cytoskeleton. The enzyme catalyses L-seryl-[protein] + ATP = O-phospho-L-seryl-[protein] + ADP + H(+). It carries out the reaction L-threonyl-[protein] + ATP = O-phospho-L-threonyl-[protein] + ADP + H(+). Its function is as follows. Serine/threonine-protein kinase involved in the process of chromatin assembly and probably also DNA replication, transcription, repair, and chromosome segregation. Negative regulator of amino acid starvation-induced autophagy. The protein is Serine/threonine-protein kinase tousled-like 2 of Xenopus tropicalis (Western clawed frog).